A 478-amino-acid polypeptide reads, in one-letter code: MSVSTHHHHVVLFPFMSKGHIIPLLQFGRLLLRHHRKEPTITVTVFTTPKNQPFISDFLSDTPEIKVISLPFPENITGIPPGVENTEKLPSMSLFVPFTRATKLLQPFFEETLKTLPKVSFMVSDGFLWWTSESAAKFNIPRFVSYGMNSYSAAVSISVFKHELFTEPESKSDTEPVTVPDFPWIKVKKCDFDHGTTEPEESGAALELSMDQIKSTTTSHGFLVNSFYELESAFVDYNNNSGDKPKSWCVGPLCLTDPPKQGSAKPAWIHWLDQKREEGRPVLYVAFGTQAEISNKQLMELAFGLEDSKVNFLWVTRKDVEEIIGEGFNDRIRESGMIVRDWVDQWEILSHESVKGFLSHCGWNSAQESICVGVPLLAWPMMAEQPLNAKMVVEEIKVGVRVETEDGSVKGFVTREELSGKIKELMEGETGKTARKNVKEYSKMAKAALVEGTGSSWKNLDMILKELCKSRDSNGASE.

UDP-alpha-D-glucose-binding positions include threonine 289, 343 to 345 (VDQ), 360 to 368 (HCGWNSAQE), and 382 to 385 (MAEQ).

The protein belongs to the UDP-glycosyltransferase family.

The polypeptide is UDP-glycosyltransferase 90A1 (UGT90A1) (Arabidopsis thaliana (Mouse-ear cress)).